The chain runs to 163 residues: Nucleotide-binding protein YajQ (163 aa).

This sequence belongs to the YajQ family.

Nucleotide-binding protein. The chain is Nucleotide-binding protein YajQ from Salmonella heidelberg (strain SL476).